We begin with the raw amino-acid sequence, 623 residues long: Membrane protein insertase YidC (623 aa).

A run of 5 helical transmembrane segments spans residues Leu8 to Pro28, Met379 to Tyr399, Leu449 to Ile469, Thr507 to Leu527, and Ile543 to Val563. Over residues Lys601–Pro617 the composition is skewed to low complexity. A disordered region spans residues Lys601–Pro623.

The protein belongs to the OXA1/ALB3/YidC family. Type 1 subfamily. In terms of assembly, interacts with the Sec translocase complex via SecD. Specifically interacts with transmembrane segments of nascent integral membrane proteins during membrane integration.

Its subcellular location is the cell inner membrane. In terms of biological role, required for the insertion and/or proper folding and/or complex formation of integral membrane proteins into the membrane. Involved in integration of membrane proteins that insert both dependently and independently of the Sec translocase complex, as well as at least some lipoproteins. Aids folding of multispanning membrane proteins. The protein is Membrane protein insertase YidC of Cereibacter sphaeroides (strain ATCC 17023 / DSM 158 / JCM 6121 / CCUG 31486 / LMG 2827 / NBRC 12203 / NCIMB 8253 / ATH 2.4.1.) (Rhodobacter sphaeroides).